The primary structure comprises 305 residues: Ribonuclease BN (305 aa).

His64, His66, Asp68, His69, His141, Asp212, and His270 together coordinate Zn(2+). Asp68 acts as the Proton acceptor in catalysis.

Belongs to the RNase Z family. RNase BN subfamily. In terms of assembly, homodimer. Zn(2+) serves as cofactor.

Functionally, zinc phosphodiesterase, which has both exoribonuclease and endoribonuclease activities. The polypeptide is Ribonuclease BN (Escherichia coli O127:H6 (strain E2348/69 / EPEC)).